The sequence spans 114 residues: Immunomodulatory protein FIP-Fve (114 aa).

S1 carries the post-translational modification N-acetylserine.

It belongs to the fungal immunomodulatory protein (FIP) family. In terms of assembly, homodimer.

Lectin with specificity for complex cell-surface carbohydrates. Possesses immunomodulatory activity, stimulates lymphocyte mitogenesis, suppresses systemic anaphylaxis reactions and edema, enhances transcription of IL-2, IFN-gamma and TNF-alpha and hemagglutinates red blood cells. This is Immunomodulatory protein FIP-Fve from Flammulina velutipes (Agaricus velutipes).